A 1112-amino-acid chain; its full sequence is Mediator of RNA polymerase II transcription subunit 14 (1112 aa).

Disordered regions lie at residues 1–76 (MPGV…INES), 120–141 (SPHG…QSPE), and 1088–1112 (TNSA…ITID). The segment covering 20–39 (SPDNVSSTPFPQERVNQSGD) has biased composition (polar residues). Positions 64 to 73 (IETHTGKDGI) are enriched in basic and acidic residues. Polar residues predominate over residues 1088 to 1099 (TNSAGARSSQQC).

Belongs to the Mediator complex subunit 14 family. In terms of assembly, component of the Mediator complex.

The protein resides in the nucleus. Functionally, component of the Mediator complex, a coactivator involved in the regulated transcription of nearly all RNA polymerase II-dependent genes. Mediator functions as a bridge to convey information from gene-specific regulatory proteins to the basal RNA polymerase II transcription machinery. Mediator is recruited to promoters by direct interactions with regulatory proteins and serves as a scaffold for the assembly of a functional preinitiation complex with RNA polymerase II and the general transcription factors. The chain is Mediator of RNA polymerase II transcription subunit 14 (rgr1) from Aspergillus clavatus (strain ATCC 1007 / CBS 513.65 / DSM 816 / NCTC 3887 / NRRL 1 / QM 1276 / 107).